Here is a 58-residue protein sequence, read N- to C-terminus: Small ribosomal subunit protein bS21 (58 aa).

The segment at 37-58 (FYEKPSVKRKRKSEAARKRKKF) is disordered. Over residues 43 to 58 (VKRKRKSEAARKRKKF) the composition is skewed to basic residues.

This sequence belongs to the bacterial ribosomal protein bS21 family.

This is Small ribosomal subunit protein bS21 from Streptococcus sanguinis (strain SK36).